Reading from the N-terminus, the 495-residue chain is uncharacterized protein (495 aa).

The CHY-type zinc finger occupies 389-457; the sequence is PLPNNGACEH…KDATCPHCGN (69 aa). Positions 396, 398, 410, 411, 417, 420, 421, 427, 437, 440, 452, and 455 each coordinate Zn(2+). Residues 473-483 are compositionally biased toward basic and acidic residues; it reads GMRDRVRMSRK. The segment at 473–495 is disordered; it reads GMRDRVRMSRKDPRKYKRKHHGN. Residues 484-495 are compositionally biased toward basic residues; it reads DPRKYKRKHHGN.

It is found in the cytoplasm. This is an uncharacterized protein from Schizosaccharomyces pombe (strain 972 / ATCC 24843) (Fission yeast).